Consider the following 87-residue polypeptide: UPF0250 protein SG0794 (87 aa).

It belongs to the UPF0250 family.

The chain is UPF0250 protein SG0794 from Sodalis glossinidius (strain morsitans).